Consider the following 357-residue polypeptide: Histidine biosynthesis bifunctional protein HisB (357 aa).

The interval 1–168 (MSEKVLFIDR…IVFKLTKKHD (168 aa)) is histidinol-phosphatase. Asp-9 (nucleophile) is an active-site residue. The Mg(2+) site is built by Asp-9 and Asp-11. The active-site Proton donor is the Asp-11. Zn(2+) is bound by residues Cys-93, His-95, Cys-101, and Cys-103. Asp-130 serves as a coordination point for Mg(2+). Positions 169-357 (RHAKVVRNTK…KNLPSSKGLL (189 aa)) are imidazoleglycerol-phosphate dehydratase.

It in the N-terminal section; belongs to the histidinol-phosphatase family. In the C-terminal section; belongs to the imidazoleglycerol-phosphate dehydratase family. Mg(2+) is required as a cofactor. Zn(2+) serves as cofactor.

The protein resides in the cytoplasm. The catalysed reaction is D-erythro-1-(imidazol-4-yl)glycerol 3-phosphate = 3-(imidazol-4-yl)-2-oxopropyl phosphate + H2O. It catalyses the reaction L-histidinol phosphate + H2O = L-histidinol + phosphate. The protein operates within amino-acid biosynthesis; L-histidine biosynthesis; L-histidine from 5-phospho-alpha-D-ribose 1-diphosphate: step 6/9. Its pathway is amino-acid biosynthesis; L-histidine biosynthesis; L-histidine from 5-phospho-alpha-D-ribose 1-diphosphate: step 8/9. This Buchnera aphidicola subsp. Baizongia pistaciae (strain Bp) protein is Histidine biosynthesis bifunctional protein HisB.